Consider the following 345-residue polypeptide: N-acetyl-gamma-glutamyl-phosphate reductase (345 aa).

Cys-149 is an active-site residue.

The protein belongs to the NAGSA dehydrogenase family. Type 1 subfamily.

It is found in the cytoplasm. It carries out the reaction N-acetyl-L-glutamate 5-semialdehyde + phosphate + NADP(+) = N-acetyl-L-glutamyl 5-phosphate + NADPH + H(+). Its pathway is amino-acid biosynthesis; L-arginine biosynthesis; N(2)-acetyl-L-ornithine from L-glutamate: step 3/4. Catalyzes the NADPH-dependent reduction of N-acetyl-5-glutamyl phosphate to yield N-acetyl-L-glutamate 5-semialdehyde. This chain is N-acetyl-gamma-glutamyl-phosphate reductase, found in Bacillus cereus (strain ATCC 10987 / NRS 248).